The sequence spans 239 residues: Glucosamine-6-phosphate deaminase (239 aa).

The Proton acceptor; for enolization step role is filled by Asp-62. Asn-128 serves as the catalytic For ring-opening step. His-130 (proton acceptor; for ring-opening step) is an active-site residue. The active-site For ring-opening step is Glu-135.

The protein belongs to the glucosamine/galactosamine-6-phosphate isomerase family. NagB subfamily.

It carries out the reaction alpha-D-glucosamine 6-phosphate + H2O = beta-D-fructose 6-phosphate + NH4(+). The protein operates within amino-sugar metabolism; N-acetylneuraminate degradation; D-fructose 6-phosphate from N-acetylneuraminate: step 5/5. Catalyzes the reversible isomerization-deamination of glucosamine 6-phosphate (GlcN6P) to form fructose 6-phosphate (Fru6P) and ammonium ion. In Lactobacillus johnsonii (strain CNCM I-12250 / La1 / NCC 533), this protein is Glucosamine-6-phosphate deaminase.